Consider the following 500-residue polypeptide: Polyenoic fatty acid isomerase (500 aa).

The N-terminal stretch at 1-21 (MSLNRVLHIFLIAYLACTALT) is a signal peptide.

As to quaternary structure, homodimer. Requires an oxidized flavin as cofactor. In terms of processing, glycosylated.

The catalysed reaction is (5Z,8Z,11Z,14Z,17Z)-eicosapentaenoate = (5Z,7E,9E,14Z,17Z)-icosapentaenoate. Functionally, involved in the biosynthesis of conjugated triene-containing fatty acids. Catalyzes the isomerization of a wide range of substrates containing three or more methylene interrupted olefins into a Z,E,E conjugated triene functionality. May be involved in a stress tolerance mechanism as response to intertidal habitats with direct sunlight, desiccation and high temperature. In vitro substrates include arachidonic acid ((5Z,8Z,11Z,14Z)-eicosatetraenoic acid), EPA ((5Z,8Z, 11Z,14Z,17Z)-eicosapentaenoic acid), DHA ((4Z,7Z,10Z,13Z,16Z,19Z)-docosahexenoic acid), adrenic acid ((7Z,10Z,13Z,16Z)-docosatetraenoic acid), anandamide (arachidonyl-N-ethanolamide) and eicosatrienoic acid ((5Z,8Z,11Z)-eicosatrienoic acid). Gamma-linolenic acid (18:3 6Z,9Z,12Z) and dihomo-gamma-linolenic acid (20:3 8Z,11Z,14Z) are transformed into mixtures of conjugated diene and triene fatty acids, linoleic acid is only transformed to a conjugated diene. This is Polyenoic fatty acid isomerase from Ptilota filicina (Red alga).